The primary structure comprises 419 residues: Tyrosine--tRNA ligase (419 aa).

L-tyrosine is bound at residue Y34. Positions 39–48 match the 'HIGH' region motif; the sequence is PSGDSMHIGH. L-tyrosine contacts are provided by Y168 and Q172. A 'KMSKS' region motif is present at residues 230–234; that stretch reads KFGKS. K233 is an ATP binding site. Residues 352–418 form the S4 RNA-binding domain; the sequence is VNLVDWLVSL…GKKKYFLVSY (67 aa).

This sequence belongs to the class-I aminoacyl-tRNA synthetase family. TyrS type 1 subfamily. Homodimer.

It localises to the cytoplasm. It carries out the reaction tRNA(Tyr) + L-tyrosine + ATP = L-tyrosyl-tRNA(Tyr) + AMP + diphosphate + H(+). In terms of biological role, catalyzes the attachment of tyrosine to tRNA(Tyr) in a two-step reaction: tyrosine is first activated by ATP to form Tyr-AMP and then transferred to the acceptor end of tRNA(Tyr). This Listeria welshimeri serovar 6b (strain ATCC 35897 / DSM 20650 / CCUG 15529 / CIP 8149 / NCTC 11857 / SLCC 5334 / V8) protein is Tyrosine--tRNA ligase.